The following is a 167-amino-acid chain: Lipoprotein signal peptidase (167 aa).

The next 3 helical transmembrane spans lie at 10–30, 68–88, and 98–118; these read LIWLLLSIAIIALDQATKAWV, WQMWLFIALALGISGLLTFWL, and SALPYALIIGGGIGNVIDRFL. Residues aspartate 124 and aspartate 142 contribute to the active site. A helical transmembrane segment spans residues 138-158; that stretch reads FNLADSAIVAGAIGIGLLSLF.

This sequence belongs to the peptidase A8 family.

The protein localises to the cell inner membrane. It catalyses the reaction Release of signal peptides from bacterial membrane prolipoproteins. Hydrolyzes -Xaa-Yaa-Zaa-|-(S,diacylglyceryl)Cys-, in which Xaa is hydrophobic (preferably Leu), and Yaa (Ala or Ser) and Zaa (Gly or Ala) have small, neutral side chains.. Its pathway is protein modification; lipoprotein biosynthesis (signal peptide cleavage). This protein specifically catalyzes the removal of signal peptides from prolipoproteins. The sequence is that of Lipoprotein signal peptidase from Xylella fastidiosa (strain 9a5c).